Consider the following 838-residue polypeptide: V-type proton ATPase 116 kDa subunit a 1 (838 aa).

Residues 1-388 (MGELFRSEEM…DAYGIGTYRE (388 aa)) lie on the Cytoplasmic side of the membrane. A phosphothreonine mark is found at T250 and T360. Phosphotyrosine is present on Y364. Residues 389 to 407 (INPAPYTIITFPFLFAVMF) traverse the membrane as a helical segment. At 408–409 (GD) the chain is on the vacuolar side. A helical membrane pass occupies residues 410–426 (LGHGILMTLFAVWMVLK). The Cytoplasmic segment spans residues 427–441 (ESRILSQKNENEMFS). The chain crosses the membrane as a helical span at residues 442–471 (TIFSGRYIILLMGVFSIYTGLIYNDCFSKS). Over 472-535 (LNIFGSSWSV…ATNKLTFLNS (64 aa)) the chain is Vacuolar. A helical membrane pass occupies residues 536-555 (FKMKMSVILGIIHMLFGVSL). Topologically, residues 556–573 (SLFNHTYFKKPLNIYFGF) are cytoplasmic. The helical transmembrane segment at 574–594 (IPEIIFMTSLFGYLVILIFYK) threads the bilayer. Residues 595 to 639 (WTAYNAKTSEKAPSLLIHFINMFLFSYGDSGNSMLYSGQKGIQCF) are Vacuolar-facing. A helical transmembrane segment spans residues 640–659 (LVVVALLCVPWMLLFKPLVL). Residues 660 to 725 (RRQYLRRKHL…DTMVHQAIHT (66 aa)) are Cytoplasmic-facing. Residues 726 to 750 (IEYCLGCISNTASYLRLWALSLAHA) traverse the membrane as a helical segment. Topologically, residues 751 to 771 (QLSEVLWTMVIHIGLKVKSLA) are vacuolar. Residues 772 to 810 (GGLALFFIFAAFATLTVAILLIMEGLSAFLHALRLHWVE) traverse the membrane as a helical segment. The Cytoplasmic portion of the chain corresponds to 811–838 (FQNKFYSGTGFKFLPFSFEHIREGKFDD).

Belongs to the V-ATPase 116 kDa subunit family. As to quaternary structure, V-ATPase is a heteromultimeric enzyme made up of two complexes: the ATP-hydrolytic V1 complex and the proton translocation V0 complex. The V1 complex consists of three catalytic AB heterodimers that form a heterohexamer, three peripheral stalks each consisting of EG heterodimers, one central rotor including subunits D and F, and the regulatory subunits C and H. The proton translocation complex V0 consists of the proton transport subunit a, a ring of proteolipid subunits c9c'', rotary subunit d, subunits e and f, and the accessory subunits ATP6AP1/Ac45 and ATP6AP2/PRR. Interacts with SPAAR. In terms of tissue distribution, expressed in brain (at protein level). As to expression, expressed heart, kidney, liver, spleen, and to a lesser extent in brain.

The protein resides in the cytoplasmic vesicle. It localises to the clathrin-coated vesicle membrane. The protein localises to the secretory vesicle. It is found in the synaptic vesicle membrane. Its subcellular location is the melanosome. Its function is as follows. Subunit of the V0 complex of vacuolar(H+)-ATPase (V-ATPase), a multisubunit enzyme composed of a peripheral complex (V1) that hydrolyzes ATP and a membrane integral complex (V0) that translocates protons. V-ATPase is responsible for the acidification of various organelles, such as lysosomes, endosomes, the trans-Golgi network, and secretory granules, including synaptic vesicles. In certain cell types, can be exported to the plasma membrane, where it is involved in the acidification of the extracellular environment. Required for assembly and activity of the vacuolar ATPase. Through its action on compartment acidification, plays an essential role in neuronal development in terms of integrity and connectivity of neurons. The polypeptide is V-type proton ATPase 116 kDa subunit a 1 (ATP6V0A1) (Bos taurus (Bovine)).